Consider the following 183-residue polypeptide: Pentapeptide repeat protein MfpA (183 aa).

A Pentapeptide repeat domain is found at 113 to 147 (SLVDTDLRKCVLRGADLSGARTTGARLDDADLRGA).

Belongs to the pentapeptide repeat protein family. In terms of assembly, homodimer. Probably interacts with DNA gyrase.

In terms of biological role, might be involved in fluoroquinolone resistance. Inhibits ATP-independent DNA relaxation, ATP-dependent DNA supercoiling and ATP-dependent decatenation by endogenous gyrase, 50% inhibition occurs at 2 uM; inhibition is abolished if GyrA is mutated (Asp-87 to Gly or His). Also inhibits fluoroquinolone-promoted dsDNA cleavage. Increases fluoroquinolone (ciprofloxacin or moxifloxacin) inhibition of gyrase supercoiling activity in a concentration-dependent manner. Inhibits DNA relaxation and supercoiling by E.coli gyrase. Forms a structure that exhibits size, shape and electrostatic similarity to B-form DNA; it may bind to DNA gyrase which is postulated to protect it from fluoroquinolones. The sequence is that of Pentapeptide repeat protein MfpA from Mycobacterium tuberculosis (strain ATCC 25618 / H37Rv).